The primary structure comprises 383 residues: Trihelix transcription factor ASIL1 (383 aa).

Disordered stretches follow at residues 1–32 (MEDDDEIQSIPSPGDSSLSPQAPPSPPILPTN), 61–94 (HTPSVTGGGGSGNRNGRGGGGGSGGGGGGRDDCW), 189–295 (IASS…SGVG), and 346–383 (EITQNNQEEEERSRQRGERRIVDDDDDRNGKNNGNVSS). The span at 66–88 (TGGGGSGNRNGRGGGGGSGGGGG) shows a compositional bias: gly residues. A Myb-like domain is found at 94–153 (WSEEATKVLIEAWGDRFSEPGKGTLKQQHWKEVAEIVNKSRQCKYPKTDIQCKNRIDTVK). The segment covering 206-225 (NSRSSMFKRQTKGNQIVQQQ) has biased composition (polar residues). The segment covering 226 to 235 (QEKRGSDSMR) has biased composition (basic and acidic residues). The Bipartite nuclear localization signal signature appears at 228–241 (KRGSDSMRWHFRKR). Acidic residues predominate over residues 246 to 262 (TESESDPEPEASPEESA). Positions 263–274 (ESLPPLQPIQPL) are enriched in low complexity. A coiled-coil region spans residues 304–365 (FTEAYEKAET…ERSRQRGERR (62 aa)). The segment covering 356–367 (ERSRQRGERRIV) has biased composition (basic and acidic residues).

The protein localises to the nucleus. Its function is as follows. Transcription repressor that binds specific DNA sequence such as the GT-box-like motif 5'-CGTGATT-3' in the AT2S3 promoter. Negative regulator of seed maturation genes during seed germination and seedling development. May target GT-box-containing embryonic genes by competing with the binding of transcriptional activators to this promoter region. Contributes to the maintenance and control of seed filling and may repress the maturation program during early embryogenesis. This chain is Trihelix transcription factor ASIL1, found in Arabidopsis thaliana (Mouse-ear cress).